The chain runs to 372 residues: DNA double-strand break repair protein Mre11 (372 aa).

The Mn(2+) site is built by D8, H10, D49, and N84. H85 functions as the Proton donor in the catalytic mechanism. 3 residues coordinate Mn(2+): H161, H190, and H192.

The protein belongs to the MRE11/RAD32 family. As to quaternary structure, homodimer. Forms a heterotetramer composed of two Mre11 subunits and two Rad50 subunits. Mn(2+) is required as a cofactor.

Nuclease activity is regulated by Rad50. In terms of biological role, part of the Rad50/Mre11 complex, which is involved in the early steps of DNA double-strand break (DSB) repair. The complex may facilitate opening of the processed DNA ends to aid in the recruitment of HerA and NurA. Mre11 binds to DSB ends and has both double-stranded 3'-5' exonuclease activity and single-stranded endonuclease activity. The sequence is that of DNA double-strand break repair protein Mre11 from Methanococcus maripaludis (strain DSM 14266 / JCM 13030 / NBRC 101832 / S2 / LL).